The primary structure comprises 125 residues: Small ribosomal subunit protein bS6 (125 aa).

This sequence belongs to the bacterial ribosomal protein bS6 family.

Functionally, binds together with bS18 to 16S ribosomal RNA. In Campylobacter jejuni (strain RM1221), this protein is Small ribosomal subunit protein bS6.